A 651-amino-acid chain; its full sequence is MKILLVEDDDVLIKVLTKNLTTHHYIVDVVKDGEMGWTYGSTFEYDLIILDIMLPNLDGISLCKRFRAQGYTVPILLLTAQDNITAKVQGLDAGADDYVVKPFDPIELIARIRALLRRGSNNPFPLLTWGDLLLNPSTCEVTYNGCPLNLTTMEYDLLELLLRNCQHVFSSEELLDKLWSSEDFPSEATVRSHVRRLRHKLVAAGAPHDFIATMHGRGYYLKAPSTEEVNNLSVTPENNSHSAAVIVKSRETESDRPQHLIPSDSQQQYLAFLNETWTRTKPQSLDQMGILLQIVRDLQTNQLTPQQQTQAQHVAHKLAGTLGIFGLTKTMHIARQLEYWLGGRERLQPKHAPLMKTLVTALQQDIDHTTLIQLSQIPAGQSPLLLMISADNEFNQSIVAVAASRGIRIQIAPTPDIAPAMLTNEPVLDGFGEDPDVILMRLPSMPSRAEVIEQPNSELSNIWKTLQTFAERYPKLPIVVIGDRGEMSDRLEAMRRGGKLFLVTPTPPEQIVDTVVNLLRDPEIPNKVMILDDDQDWLRTLPTLLKPWGFKVTTLADPQQFWTVLQAVTPDALVLDVNMPQINGFELCQLLRSDPHWQRLPVLFLSVLTDPTTQNQAFAVGGDDYLCKPVKGVELANRILRRLQRVRAWAN.

One can recognise a Response regulatory 1 domain in the interval 2 to 116 (KILLVEDDDV…ELIARIRALL (115 aa)). Aspartate 51 is subject to 4-aspartylphosphate. The segment at residues 124 to 223 (FPLLTWGDLL…MHGRGYYLKA (100 aa)) is a DNA-binding region (ompR/PhoB-type). 2 Response regulatory domains span residues 384-519 (LLLM…VNLL) and 527-643 (KVMI…LRRL).

Functionally, required for chromatic adaptation. Thought to be a positive regulator of phycobiliproteins. The polypeptide is Protein RcaC (rcaC) (Microchaete diplosiphon (Fremyella diplosiphon)).